Reading from the N-terminus, the 267-residue chain is Thymidylate synthase (267 aa).

Arginine 25 is a dUMP binding site. Histidine 55 contacts (6R)-5,10-methylene-5,6,7,8-tetrahydrofolate. Residue 130–131 coordinates dUMP; that stretch reads RR. Residue cysteine 150 is the Nucleophile of the active site. DUMP is bound by residues 170 to 173, asparagine 181, and 211 to 213; these read RSAD and HIY. Aspartate 173 contacts (6R)-5,10-methylene-5,6,7,8-tetrahydrofolate. Residue alanine 266 participates in (6R)-5,10-methylene-5,6,7,8-tetrahydrofolate binding.

The protein belongs to the thymidylate synthase family. Bacterial-type ThyA subfamily. As to quaternary structure, homodimer.

It is found in the cytoplasm. The catalysed reaction is dUMP + (6R)-5,10-methylene-5,6,7,8-tetrahydrofolate = 7,8-dihydrofolate + dTMP. It functions in the pathway pyrimidine metabolism; dTTP biosynthesis. Its function is as follows. Catalyzes the reductive methylation of 2'-deoxyuridine-5'-monophosphate (dUMP) to 2'-deoxythymidine-5'-monophosphate (dTMP) while utilizing 5,10-methylenetetrahydrofolate (mTHF) as the methyl donor and reductant in the reaction, yielding dihydrofolate (DHF) as a by-product. This enzymatic reaction provides an intracellular de novo source of dTMP, an essential precursor for DNA biosynthesis. This is Thymidylate synthase from Corynebacterium efficiens (strain DSM 44549 / YS-314 / AJ 12310 / JCM 11189 / NBRC 100395).